A 478-amino-acid chain; its full sequence is Protein nucleotidyltransferase YdiU (478 aa).

Residues G74, G76, R77, K97, D109, G110, R160, and R167 each coordinate ATP. The active-site Proton acceptor is D236. Residues N237 and D246 each coordinate Mg(2+). Residue D246 participates in ATP binding.

Belongs to the SELO family. Requires Mg(2+) as cofactor. The cofactor is Mn(2+).

It catalyses the reaction L-seryl-[protein] + ATP = 3-O-(5'-adenylyl)-L-seryl-[protein] + diphosphate. It carries out the reaction L-threonyl-[protein] + ATP = 3-O-(5'-adenylyl)-L-threonyl-[protein] + diphosphate. The catalysed reaction is L-tyrosyl-[protein] + ATP = O-(5'-adenylyl)-L-tyrosyl-[protein] + diphosphate. The enzyme catalyses L-histidyl-[protein] + UTP = N(tele)-(5'-uridylyl)-L-histidyl-[protein] + diphosphate. It catalyses the reaction L-seryl-[protein] + UTP = O-(5'-uridylyl)-L-seryl-[protein] + diphosphate. It carries out the reaction L-tyrosyl-[protein] + UTP = O-(5'-uridylyl)-L-tyrosyl-[protein] + diphosphate. Its function is as follows. Nucleotidyltransferase involved in the post-translational modification of proteins. It can catalyze the addition of adenosine monophosphate (AMP) or uridine monophosphate (UMP) to a protein, resulting in modifications known as AMPylation and UMPylation. This is Protein nucleotidyltransferase YdiU from Chromobacterium violaceum (strain ATCC 12472 / DSM 30191 / JCM 1249 / CCUG 213 / NBRC 12614 / NCIMB 9131 / NCTC 9757 / MK).